A 1056-amino-acid polypeptide reads, in one-letter code: RNA cytidine acetyltransferase (1056 aa).

An ATP-binding site is contributed by 286–295 (GRGKSAALGI). Residues 433–446 (QNNTSGRESTQTAV) are compositionally biased toward polar residues. The segment at 433 to 463 (QNNTSGRESTQTAVVSRDNKEKDSHLHSQSR) is disordered. Over residues 449–463 (RDNKEKDSHLHSQSR) the composition is skewed to basic and acidic residues. Residue arginine 475 coordinates ATP. The 141-residue stretch at 566-706 (VLLPPIDPKD…VKLRDAKTLP (141 aa)) folds into the N-acetyltransferase domain. Acetyl-CoA contacts are provided by residues 638–640 (IAT), 645–651 (ASMGYGS), and asparagine 739. 3 positions are modified to phosphoserine: serine 1001, serine 1007, and serine 1010.

Belongs to the RNA cytidine acetyltransferase family. NAT10 subfamily. As to quaternary structure, interacts with TAN1. Associates with 90S pre-ribosomal particles.

Its subcellular location is the nucleus. It is found in the nucleolus. It catalyses the reaction a cytidine in 18S rRNA + acetyl-CoA + ATP + H2O = an N(4)-acetylcytidine in 18S rRNA + ADP + phosphate + CoA + H(+). It carries out the reaction a cytidine in tRNA + acetyl-CoA + ATP + H2O = an N(4)-acetylcytidine in tRNA + ADP + phosphate + CoA + H(+). RNA cytidine acetyltransferase with specificity toward both 18S rRNA and tRNAs. Catalyzes the formation of N(4)-acetylcytidine (ac4C) at positions 1280 and 1773 in 18S rRNA. Required for early nucleolar cleavages of precursor rRNA at sites A0, A1 and A2 during 18S rRNA synthesis. Catalyzes the formation of ac4C at position 12 in serine and leucine tRNAs. Requires the tRNA-binding adapter protein TAN1 for full tRNA acetyltransferase activity but not for 18S rRNA acetylation. The sequence is that of RNA cytidine acetyltransferase from Saccharomyces cerevisiae (strain ATCC 204508 / S288c) (Baker's yeast).